A 464-amino-acid chain; its full sequence is Dihydrolipoyl dehydrogenase (464 aa).

FAD contacts are provided by residues 33-41 (EPKYWGGVC), K50, and G113. C41 and C46 are disulfide-bonded. NAD(+) contacts are provided by residues 178–182 (GAGAI), E201, and 266–269 (AIGF). FAD-binding residues include D309 and A317. The active-site Proton acceptor is the H443.

This sequence belongs to the class-I pyridine nucleotide-disulfide oxidoreductase family. As to quaternary structure, homodimer. Part of the PDH complex, consisting of multiple copies of AceE (E1), DlaT (E2) and Lpd (E3), and of the BCKADH complex, consisting of multiple copies of BkdA/BkdB (E1), BkdC (E2) and Lpd (E3). FAD serves as cofactor.

Its subcellular location is the cytoplasm. It carries out the reaction N(6)-[(R)-dihydrolipoyl]-L-lysyl-[protein] + NAD(+) = N(6)-[(R)-lipoyl]-L-lysyl-[protein] + NADH + H(+). Functionally, lipoamide dehydrogenase is a component of the alpha-ketoacid dehydrogenase complexes. Catalyzes the reoxidation of dihydrolipoyl groups which are covalently attached to the lipoate acyltransferase components (E2) of the complexes. This chain is Dihydrolipoyl dehydrogenase (lpd), found in Mycobacterium bovis (strain ATCC BAA-935 / AF2122/97).